The primary structure comprises 464 residues: tRNA modification GTPase MnmE (464 aa).

Residues Arg25, Glu87, and Lys130 each contribute to the (6S)-5-formyl-5,6,7,8-tetrahydrofolate site. The region spanning Gly226–Gly386 is the TrmE-type G domain. K(+) is bound at residue Asn236. GTP is bound by residues Asn236–Ser241, Thr255–Thr261, and Asp280–Gly283. Mg(2+) is bound at residue Ser240. Thr255, Ile257, and Thr260 together coordinate K(+). Thr261 contributes to the Mg(2+) binding site. Lys464 contributes to the (6S)-5-formyl-5,6,7,8-tetrahydrofolate binding site.

This sequence belongs to the TRAFAC class TrmE-Era-EngA-EngB-Septin-like GTPase superfamily. TrmE GTPase family. Homodimer. Heterotetramer of two MnmE and two MnmG subunits. K(+) is required as a cofactor.

The protein resides in the cytoplasm. Exhibits a very high intrinsic GTPase hydrolysis rate. Involved in the addition of a carboxymethylaminomethyl (cmnm) group at the wobble position (U34) of certain tRNAs, forming tRNA-cmnm(5)s(2)U34. The protein is tRNA modification GTPase MnmE of Burkholderia orbicola (strain AU 1054).